We begin with the raw amino-acid sequence, 348 residues long: Rhodopsin (348 aa).

M1 is subject to N-acetylmethionine. Residues 1 to 36 are Extracellular-facing; sequence MNGTEGPNFYVPFSNATGVVRSPFEYPQYYLAEPWQ. N-linked (GlcNAc...) asparagine glycans are attached at residues N2 and N15. The chain crosses the membrane as a helical span at residues 37-61; the sequence is FSMLAAYMFLLIVLGFPINFLTLYV. Residues 62-73 lie on the Cytoplasmic side of the membrane; the sequence is TVQHKKLRTPLN. Residues 74–96 form a helical membrane-spanning segment; it reads YILLNLAVADLFMVFGGFTTTLY. Topologically, residues 97-110 are extracellular; the sequence is TSLHGYFVFGPTGC. A disulfide bond links C110 and C187. The helical transmembrane segment at 111–133 threads the bilayer; that stretch reads NLEGFFATLGGEIALWSLVVLAI. A 'Ionic lock' involved in activated form stabilization motif is present at residues 134–136; sequence ERY. Over 134–152 the chain is Cytoplasmic; that stretch reads ERYVVICKPMSNFRFGENH. Residues 153 to 173 traverse the membrane as a helical segment; sequence AIMGVVFTWIMALACAAPPLV. At 174–202 the chain is on the extracellular side; sequence GWSRYIPEGMQCSCGVDYYTLKPEVNNES. E201 is a Zn(2+) binding site. A helical membrane pass occupies residues 203–224; that stretch reads FVIYMFVVHFTIPLIVIFFCYG. Residues 225–252 are Cytoplasmic-facing; that stretch reads QLVFTVKEAAAQQQESATTQKAEKEVTR. Residues 253–274 traverse the membrane as a helical segment; that stretch reads MVILMVVFFLICWFPYAGVAFY. The Extracellular portion of the chain corresponds to 275-286; the sequence is IFTHQGSNFGPI. Zn(2+) is bound at residue Q279. Residues 287–308 traverse the membrane as a helical segment; the sequence is FMTLPAFFAKSSSIYNPVIYIM. The residue at position 296 (K296) is an N6-(retinylidene)lysine. Over 309-348 the chain is Cytoplasmic; sequence MNKQFRNCMLTTLCCGKNILGDDEASATASKTETSQVAPA. Residues C322 and C323 are each lipidated (S-palmitoyl cysteine). The interaction with SAG stretch occupies residues 330-348; it reads DDEASATASKTETSQVAPA. Phosphoserine is present on S334. T336 carries the phosphothreonine modification. Position 338 is a phosphoserine (S338). Phosphothreonine is present on residues T340 and T342. S343 carries the post-translational modification Phosphoserine.

This sequence belongs to the G-protein coupled receptor 1 family. Opsin subfamily. Homodimer. May form a complex composed of RHO, GRK1 and RCVRN in a Ca(2+)-dependent manner; RCVRN prevents the interaction between GRK1 and RHO. Interacts with GRK1. Interacts (phosphorylated form) with SAG. Interacts with GNAT1. Interacts with GNAT3. SAG and G-proteins compete for a common binding site. Interacts with PRCD; the interaction promotes PRCD stability. Forms a complex with ASAP1 and ARF4. Forms a complex with ASAP1, RAB11A, Rabin8/RAB3IP, ARF4 and RAB11FIP3; the complex regulates Golgi-to-cilia rhodopsin/RHO transport in photoreceptors. Post-translationally, phosphorylated on some or all of the serine and threonine residues present in the C-terminal region. In terms of processing, contains one covalently linked retinal chromophore. Upon light absorption, the covalently bound 11-cis-retinal is converted to all-trans-retinal. After hydrolysis of the Schiff base and release of the covalently bound all-trans-retinal, active rhodopsin is regenerated by binding of a fresh molecule of 11-cis-retinal.

Its subcellular location is the membrane. It is found in the cell projection. The protein localises to the cilium. The protein resides in the photoreceptor outer segment. Photoreceptor required for image-forming vision at low light intensity. Required for photoreceptor cell viability after birth. Light-induced isomerization of 11-cis to all-trans retinal triggers a conformational change that activates signaling via G-proteins. Subsequent receptor phosphorylation mediates displacement of the bound G-protein alpha subunit by the arrestin SAG and terminates signaling. This Cricetulus griseus (Chinese hamster) protein is Rhodopsin (RHO).